Here is a 379-residue protein sequence, read N- to C-terminus: Beta sliding clamp (379 aa).

Belongs to the beta sliding clamp family. As to quaternary structure, forms a ring-shaped head-to-tail homodimer around DNA which binds and tethers DNA polymerases and other proteins to the DNA. The DNA replisome complex has a single clamp-loading complex (3 tau and 1 each of delta, delta', psi and chi subunits) which binds 3 Pol III cores (1 core on the leading strand and 2 on the lagging strand) each with a beta sliding clamp dimer. Additional proteins in the replisome are other copies of gamma, psi and chi, Ssb, DNA helicase and RNA primase.

It is found in the cytoplasm. Confers DNA tethering and processivity to DNA polymerases and other proteins. Acts as a clamp, forming a ring around DNA (a reaction catalyzed by the clamp-loading complex) which diffuses in an ATP-independent manner freely and bidirectionally along dsDNA. Initially characterized for its ability to contact the catalytic subunit of DNA polymerase III (Pol III), a complex, multichain enzyme responsible for most of the replicative synthesis in bacteria; Pol III exhibits 3'-5' exonuclease proofreading activity. The beta chain is required for initiation of replication as well as for processivity of DNA replication. The polypeptide is Beta sliding clamp (dnaN) (Rickettsia bellii (strain RML369-C)).